The chain runs to 523 residues: Signal peptide peptidase-like 2A (523 aa).

An N-terminal signal peptide occupies residues 1–25 (MGLLHSLHAPAAALLWSCLLGLAAA). Topologically, residues 26–175 (QEAILHASTN…PSWPNFDYTL (150 aa)) are lumenal. Residues Asn-51, Asn-61, Asn-69, Asn-119, Asn-129, and Asn-135 are each glycosylated (N-linked (GlcNAc...) asparagine). A PA domain is found at 70 to 155 (LTGTALCHLS…KDFKDMKETL (86 aa)). Residues 176-196 (VVIFVIAVFTVALGGYWSGLI) form a helical membrane-spanning segment. The Cytoplasmic segment spans residues 197–224 (ELENMKSVEDAEDRETRKKKDDYLTFSP). Residues 225 to 245 (LTVVVFVVICCIMIVLLYFFY) traverse the membrane as a helical segment. Over 246–247 (RW) the chain is Lumenal. A helical transmembrane segment spans residues 248–268 (LVYVMIAIFCIASSMSLYNCL). Over 269–288 (SALIHRMPCGQCTILCCGKN) the chain is Cytoplasmic. A helical membrane pass occupies residues 289–309 (IKVSLIFLSGLCISVAVVWAV). At 310–315 (FRNEDR) the chain is on the lumenal side. Residues 316–336 (WAWILQDILGIAFCLNLIKTM) form a helical membrane-spanning segment. Residues 337–344 (KLPNFMSC) are Cytoplasmic-facing. A helical membrane pass occupies residues 345-365 (VILLGLLLIYDVFFVFITPFI). Asp-355 is a catalytic residue. Topologically, residues 366 to 403 (TKNGESIMVELAAGPFENAEKLPVVIRVPKLMGYSVMS) are lumenal. A helical membrane pass occupies residues 404 to 424 (VCSVPVSVLGFGDIIVPGLLI). The active site involves Asp-416. At 425–440 (AYCRRFDVQTGSSIYY) the chain is on the cytoplasmic side. The helical transmembrane segment at 441 to 461 (ISSTIAYAVGMIITFVVLMVM) threads the bilayer. Over 462 to 463 (KT) the chain is Lumenal. A helical transmembrane segment spans residues 464–484 (GQPALLYLVPCTLITVSVVAW). A PAL motif is present at residues 466-468 (PAL). Over 485–523 (SRKEMKKFWKGSSYQVMDHLDYSTNEENPVTTDEQIVQQ) the chain is Cytoplasmic. Residues 498–501 (YQVM) carry the YXXo lysosomal targeting motif motif.

It belongs to the peptidase A22B family. Interacts with ITM2B. Post-translationally, glycosylated.

Its subcellular location is the late endosome membrane. It is found in the lysosome membrane. The protein localises to the membrane. Functionally, intramembrane-cleaving aspartic protease (I-CLiP) that cleaves type II membrane signal peptides in the hydrophobic plane of the membrane. Functions in FASLG, ITM2B and TNF processing. Catalyzes the intramembrane cleavage of the anchored fragment of shed TNF-alpha (TNF), which promotes the release of the intracellular domain (ICD) for signaling to the nucleus. Also responsible for the intramembrane cleavage of Fas antigen ligand FASLG, which promotes the release of the intracellular FasL domain (FasL ICD). Essential for degradation of the invariant chain CD74 that plays a central role in the function of antigen-presenting cells in the immune system. Plays a role in the regulation of innate and adaptive immunity. In Mus musculus (Mouse), this protein is Signal peptide peptidase-like 2A.